The primary structure comprises 115 residues: Large ribosomal subunit protein bL19 (115 aa).

Belongs to the bacterial ribosomal protein bL19 family.

In terms of biological role, this protein is located at the 30S-50S ribosomal subunit interface and may play a role in the structure and function of the aminoacyl-tRNA binding site. The sequence is that of Large ribosomal subunit protein bL19 from Francisella philomiragia subsp. philomiragia (strain ATCC 25017 / CCUG 19701 / FSC 153 / O#319-036).